The primary structure comprises 133 residues: Fatty acid-binding protein, heart (133 aa).

Ala-2 bears the N-acetylalanine mark. A Phosphothreonine modification is found at Thr-8. Tyr-20 is modified (phosphotyrosine; by Tyr-kinases). At Ser-23 the chain carries Phosphoserine. Phosphothreonine is present on Thr-30. Phosphoserine is present on Ser-83. 127-129 (RTY) provides a ligand contact to (9Z)-octadecenoate. Position 127-129 (127-129 (RTY)) interacts with hexadecanoate. 127–129 (RTY) is an octadecanoate binding site.

It belongs to the calycin superfamily. Fatty-acid binding protein (FABP) family.

It is found in the cytoplasm. FABPs are thought to play a role in the intracellular transport of long-chain fatty acids and their acyl-CoA esters. The sequence is that of Fatty acid-binding protein, heart (Fabp3) from Mus musculus (Mouse).